Consider the following 285-residue polypeptide: Ribosomal RNA small subunit methyltransferase I (285 aa).

Belongs to the methyltransferase superfamily. RsmI family.

The protein resides in the cytoplasm. The catalysed reaction is cytidine(1402) in 16S rRNA + S-adenosyl-L-methionine = 2'-O-methylcytidine(1402) in 16S rRNA + S-adenosyl-L-homocysteine + H(+). Functionally, catalyzes the 2'-O-methylation of the ribose of cytidine 1402 (C1402) in 16S rRNA. The chain is Ribosomal RNA small subunit methyltransferase I from Buchnera aphidicola subsp. Schizaphis graminum (strain Sg).